The sequence spans 147 residues: Nucleoside diphosphate kinase (147 aa).

ATP-binding residues include Lys9, Phe57, Arg85, Thr91, Arg102, and Asn112. Thr91 bears the Phosphothreonine mark. Residue His115 is the Pros-phosphohistidine intermediate of the active site. The residue at position 122 (Ser122) is a Phosphoserine.

The protein belongs to the NDK family. As to quaternary structure, homotetramer. Requires Mg(2+) as cofactor.

Its subcellular location is the cytoplasm. The catalysed reaction is a 2'-deoxyribonucleoside 5'-diphosphate + ATP = a 2'-deoxyribonucleoside 5'-triphosphate + ADP. It carries out the reaction a ribonucleoside 5'-diphosphate + ATP = a ribonucleoside 5'-triphosphate + ADP. Major role in the synthesis of nucleoside triphosphates other than ATP. The ATP gamma phosphate is transferred to the NDP beta phosphate via a ping-pong mechanism, using a phosphorylated active-site intermediate. The chain is Nucleoside diphosphate kinase from Halalkalibacterium halodurans (strain ATCC BAA-125 / DSM 18197 / FERM 7344 / JCM 9153 / C-125) (Bacillus halodurans).